A 251-amino-acid polypeptide reads, in one-letter code: uncharacterized protein (251 aa).

The protein belongs to the FAM243 family.

This is an uncharacterized protein from Bos taurus (Bovine).